Here is a 798-residue protein sequence, read N- to C-terminus: Integrin beta-1 (798 aa).

The first 20 residues, 1–20 (MNLQPIFWIGLISSICCVFA), serve as a signal peptide directing secretion. One can recognise a PSI domain in the interval 26-76 (RCLKANAKSCGECIQAGPNCGWCTNSTFLQEGMPTSARCDDLEALKKKGCP). Disulfide bonds link Cys-27–Cys-45, Cys-35–Cys-464, Cys-38–Cys-64, Cys-48–Cys-75, Cys-207–Cys-213, Cys-261–Cys-301, Cys-401–Cys-415, Cys-435–Cys-462, Cys-466–Cys-486, Cys-477–Cys-489, Cys-491–Cys-500, Cys-502–Cys-533, Cys-516–Cys-531, Cys-525–Cys-536, Cys-538–Cys-553, Cys-555–Cys-576, Cys-560–Cys-574, Cys-568–Cys-579, Cys-581–Cys-590, Cys-592–Cys-615, Cys-599–Cys-613, Cys-607–Cys-618, Cys-620–Cys-630, Cys-633–Cys-636, Cys-640–Cys-691, Cys-646–Cys-665, Cys-649–Cys-661, and Cys-699–Cys-723. Asn-50 carries an N-linked (GlcNAc...) asparagine glycan. The interval 75 to 107 (CPPDDIENPRGSKDIKKNKNVTNRSKGTAEKLK) is disordered. Residues 81–91 (ENPRGSKDIKK) show a composition bias toward basic and acidic residues. N-linked (GlcNAc...) asparagine glycosylation is found at Asn-94 and Asn-97. Positions 140–378 (DYPIDLYYLM…QLIIDAYNSL (239 aa)) constitute a VWFA domain. Mg(2+)-binding residues include Ser-152 and Ser-154. Residues Ser-154, Asp-157, Asp-158, and Glu-189 each coordinate Ca(2+). Residues 207-213 (CTSEQNC) form a CX3CL1-binding region. N-linked (GlcNAc...) asparagine glycosylation is present at Asn-212. Ca(2+) is bound by residues Asn-244, Asp-246, Pro-248, and Glu-249. Glu-249 serves as a coordination point for Mg(2+). Residue Asn-269 is glycosylated (N-linked (GlcNAc...) asparagine). Residues 295 to 314 (LPNDGQCHLENNMYTMSHYY) are CX3CL1-binding. Ala-362 is a binding site for Ca(2+). Asn-363, Asn-406, and Asn-417 each carry an N-linked (GlcNAc...) asparagine glycan. Positions 383 to 465 (ILENSKLSEG…VILQYICECE (83 aa)) are interaction with TMEM182. I-EGF domains lie at 466 to 501 (CQSE…RHCE), 502 to 554 (CSTD…KFCE), 555 to 591 (CDNF…SACD), and 592 to 631 (CSLD…QTCE). The N-linked (GlcNAc...) asparagine glycan is linked to Asn-481. An N-linked (GlcNAc...) asparagine glycan is attached at Asn-520. Asn-584 carries N-linked (GlcNAc...) asparagine glycosylation. N-linked (GlcNAc...) asparagine glycosylation is present at Asn-669. The helical transmembrane segment at 729–749 (IIPIVAGVVAGIVLIGLALLL) threads the bilayer. The signal for sorting from recycling endosomes; interaction with ACAP1 stretch occupies residues 762-767 (EFAKFE). The residue at position 777 (Thr-777) is a Phosphothreonine. Tyr-783 bears the Phosphotyrosine mark. Ser-785 is subject to Phosphoserine. An interaction with ITGB1BP1 region spans residues 785–792 (SAVTTVVN). Phosphothreonine is present on Thr-789. Residue Lys-794 is modified to N6-acetyllysine; alternate. Lys-794 participates in a covalent cross-link: Glycyl lysine isopeptide (Lys-Gly) (interchain with G-Cter in SUMO1); alternate.

This sequence belongs to the integrin beta chain family. Interacts with seprase FAP (seprase); the interaction occurs at the cell surface of invadopodia membrane in a collagen-dependent manner. Heterodimer of an alpha and a beta subunit. Beta-1 associates with either alpha-1, alpha-2, alpha-3, alpha-4, alpha-5, alpha-6, alpha-7, alpha-8, alpha-9, alpha-10, alpha-11 or alpha-V. ITGA6:ITGB1 is found in a complex with CD9; interaction takes place in oocytes and is involved in sperm-egg fusion. Binds LGALS3BP and NMRK2, when associated with alpha-7, but not with alpha-5. Interacts with FLNA, FLNB, FLNC and RANBP9. Interacts with KRT1 in the presence of RACK1 and SRC. Interacts with JAML; integrin alpha-4/beta-1 may regulate leukocyte to endothelial cells adhesion by controlling JAML homodimerization. Interacts with RAB21. Interacts (via the cytoplasmic region) with RAB25 (via the hypervariable C-terminal region). Interacts with MYO10. Interacts with ITGB1BP1 (via C-terminal region); the interaction is a prerequisite for focal adhesion disassembly. Interacts with TLN1; the interaction is prevented by competitive binding of ITGB1BP1. Interacts with ACAP1; required for ITGB1 recycling. Interacts with ASAP3. Interacts with FERMT2; the interaction is inhibited in presence of ITGB1BP1. Interacts with DAB2. Interacts with FGR and HCK. Interacts with alpha-7A and alpha-7B in adult skeletal muscle. Interacts with alpha-7B in cardiomyocytes of adult heart. Interacts with EMP2; the interaction may be direct or indirect and ITGB1 has a heterodimer form. ITGA5:ITGB1 interacts with CCN3. ITGA4:ITGB1 is found in a ternary complex with CX3CR1 and CX3CL1. ITGA5:ITGB1 interacts with FBN1. ITGA5:ITGB1 acts as a receptor for fibronectin FN1 and mediates R-G-D-dependent cell adhesion to FN1. ITGA5:ITGB1 interacts with IL1B. Interacts with MDK. ITGA4:ITGB1 interacts with MDK; this interaction mediates MDK-induced osteoblast cells migration through PXN phosphorylation. ITGA6:ITGB1 interacts with MDK; this interaction mediates MDK-induced neurite-outgrowth. ITGA5:ITGB1 interacts with ACE2. Interacts with TMEM182 and LAMB1. Interacts with tensin TNS3; TNS3 also interacts with PEAK1, thus acting as an adapter molecule to bridge the association of PEAK1 with ITGB1. Interacts with tensin TNS4; the interaction displaces tensin TNS3 from the ITGB1 cytoplasmic tail and promotes ITGB1 stability. Integrin ITGA9:ITGB1 interacts with SPP1/OPN (via N-terminus). Integrin ITGA9:ITGB1 interacts with TNC/TNFN3 (via the 3rd Fibronectin type-III domain). Integrins ITGA4:ITGB1 and ITGA9:ITGB1 interact with SVEP1 (via Sushi domain 21); thereby inhibit Ca(2+) intracellular signaling and as a result repress vasocontraction. ITGA4:ITGB1 and ITGA5:ITGB1 interacts with SELP. Interacts with CD248. ITGA5:ITGB1 interacts with IGFBP1. ITGA4:ITGB1 interacts with BCAM. Interacts with ADGRG6.

It is found in the cell membrane. The protein resides in the cell projection. The protein localises to the invadopodium membrane. It localises to the ruffle membrane. Its subcellular location is the recycling endosome. It is found in the melanosome. The protein resides in the lamellipodium. The protein localises to the ruffle. It localises to the cell junction. Its subcellular location is the focal adhesion. Integrins alpha-1/beta-1, alpha-2/beta-1, alpha-10/beta-1 and alpha-11/beta-1 are receptors for collagen. Integrins alpha-1/beta-1 and alpha-2/beta-2 recognize the proline-hydroxylated sequence G-F-P-G-E-R in collagen. Integrins alpha-2/beta-1, alpha-3/beta-1, alpha-4/beta-1, alpha-5/beta-1, alpha-8/beta-1, alpha-10/beta-1, alpha-11/beta-1 and alpha-V/beta-1 are receptors for fibronectin. Alpha-4/beta-1 recognizes one or more domains within the alternatively spliced CS-1 and CS-5 regions of fibronectin. Integrin alpha-5/beta-1 is a receptor for fibrinogen. Integrin alpha-1/beta-1, alpha-2/beta-1, alpha-6/beta-1 and alpha-7/beta-1 are receptors for lamimin. Integrin alpha-6/beta-1 (ITGA6:ITGB1) is present in oocytes and is involved in sperm-egg fusion. Integrin alpha-4/beta-1 is a receptor for VCAM1 and recognizes the sequence Q-I-D-S in VCAM1. Integrin alpha-9/beta-1 is a receptor for VCAM1, cytotactin and osteopontin. It recognizes the sequence A-E-I-D-G-I-E-L in cytotactin. Integrin alpha-3/beta-1 is a receptor for epiligrin, thrombospondin and CSPG4. Integrin alpha-3/beta-1 provides a docking site for FAP (seprase) at invadopodia plasma membranes in a collagen-dependent manner and hence may participate in the adhesion, formation of invadopodia and matrix degradation processes, promoting cell invasion. Alpha-3/beta-1 may mediate with LGALS3 the stimulation by CSPG4 of endothelial cells migration. Integrin alpha-V/beta-1 is a receptor for vitronectin. Beta-1 integrins recognize the sequence R-G-D in a wide array of ligands. When associated with alpha-7/beta-1 integrin, regulates cell adhesion and laminin matrix deposition. Involved in promoting endothelial cell motility and angiogenesis. Involved in osteoblast compaction through the fibronectin fibrillogenesis cell-mediated matrix assembly process and the formation of mineralized bone nodules. May be involved in up-regulation of the activity of kinases such as PKC via binding to KRT1. Together with KRT1 and RACK1, serves as a platform for SRC activation or inactivation. Plays a mechanistic adhesive role during telophase, required for the successful completion of cytokinesis. ITGA4:ITGB1 binds to fractalkine (CX3CL1) and may act as its coreceptor in CX3CR1-dependent fractalkine signaling. ITGA4:ITGB1 and ITGA5:ITGB1 bind to PLA2G2A via a site (site 2) which is distinct from the classical ligand-binding site (site 1) and this induces integrin conformational changes and enhanced ligand binding to site 1. ITGA5:ITGB1 acts as a receptor for fibrillin-1 (FBN1) and mediates R-G-D-dependent cell adhesion to FBN1. ITGA5:ITGB1 is a receptor for IL1B and binding is essential for IL1B signaling. ITGA5:ITGB3 is a receptor for soluble CD40LG and is required for CD40/CD40LG signaling. Plays an important role in myoblast differentiation and fusion during skeletal myogenesis. ITGA9:ITGB1 may play a crucial role in SVEP1/polydom-mediated myoblast cell adhesion. Integrins ITGA9:ITGB1 and ITGA4:ITGB1 repress PRKCA-mediated L-type voltage-gated channel Ca(2+) influx and ROCK-mediated calcium sensitivity in vascular smooth muscle cells via their interaction with SVEP1, thereby inhibit vasocontraction. The polypeptide is Integrin beta-1 (ITGB1) (Pongo abelii (Sumatran orangutan)).